A 122-amino-acid polypeptide reads, in one-letter code: ATP synthase epsilon chain (122 aa).

Belongs to the ATPase epsilon chain family. In terms of assembly, F-type ATPases have 2 components, CF(1) - the catalytic core - and CF(0) - the membrane proton channel. CF(1) has five subunits: alpha(3), beta(3), gamma(1), delta(1), epsilon(1). CF(0) has three main subunits: a, b and c.

It localises to the cell membrane. Functionally, produces ATP from ADP in the presence of a proton gradient across the membrane. The sequence is that of ATP synthase epsilon chain from Rhodococcus jostii (strain RHA1).